The chain runs to 374 residues: CC-adding tRNA nucleotidyltransferase (374 aa).

39 to 42 (GAVR) provides a ligand contact to CTP. Positions 52 and 54 each coordinate Mg(2+). Residues 126–127 (RD), asparagine 131, 171–180 (DASRLVRAAR), and arginine 209 each bind CTP.

The protein belongs to the tRNA nucleotidyltransferase/poly(A) polymerase family. The cofactor is Mg(2+).

It catalyses the reaction a tRNA precursor + 2 CTP = a tRNA with a 3' CC end + 2 diphosphate. TRNA nucleotidyltransferase involved in the synthesis of the tRNA CCA terminus. Adds the two cytidine residues to tRNA. This chain is CC-adding tRNA nucleotidyltransferase, found in Deinococcus radiodurans (strain ATCC 13939 / DSM 20539 / JCM 16871 / CCUG 27074 / LMG 4051 / NBRC 15346 / NCIMB 9279 / VKM B-1422 / R1).